The sequence spans 395 residues: GPI-anchor transamidase (395 aa).

The N-terminal stretch at 1–27 (MAVTDSLSRAASTLAAVLLLSFGSVAA) is a signal peptide. Residues 28-368 (SHIEDQAEQF…PKLKDWHPPG (341 aa)) lie on the Lumenal side of the membrane. 4 residues coordinate Ca(2+): Asp79, Ile82, Glu118, and Asp120. His164 acts as the Proton donor in catalysis. Catalysis depends on Cys206, which acts as the Nucleophile; acyl-thioester intermediate. Residues Cys206, Ser232, and Ser234 each coordinate a protein. Positions 231–236 (DSLSHQ) are autoinhibitory loop. Cysteines 275 and 280 form a disulfide. The chain crosses the membrane as a helical span at residues 369–385 (GFILGLWALIIMVFFKT). Over 386 to 395 (YGIKHMKFIF) the chain is Cytoplasmic.

Belongs to the peptidase C13 family. As to quaternary structure, heteropentamer. Part of the GPI-anchor transamidase complex, consisting of PIGK, PIGT, PIGS, PIGU and GAA1. Interacts with GPAA1. Interacts with PIGT; this interaction, via a disulfide link, stabilizes the expression of GAA1 and PIGK and links them to PIGS. In terms of processing, the disulfide bond between PIGK/GPI8 and PIGT is important for normal enzyme activity.

It localises to the endoplasmic reticulum membrane. It participates in glycolipid biosynthesis; glycosylphosphatidylinositol-anchor biosynthesis. In the absence of proproteins substrates, exists in an inactive state with a disrupted catalytic site by an autoinhibitory loop. The binding of proprotein substrates, particularly the CSP region, to GPI-T triggers concerted conformational changes that alleviate the inhibition by the autoinhibitory loop. Meanwhile, proprotein residues near the omega- site induce the formation of a catalytic cleft for catalysis, following which the products are released and GPI-T reverts to the inactive state. In terms of biological role, catalytic subunit of the glycosylphosphatidylinositol-anchor (GPI-anchor) transamidase (GPI-T) complex that catalyzes the formation of the linkage between a proprotein and a GPI-anchor and participates in GPI anchored protein biosynthesis. Recognizes diverse proproteins at a C-terminal signal peptide (CSP) region that lacks consensus sequence and replaces it with a GPI-anchor via a transamidation reaction. Transamidation catalysis reaction follows a two-phase mechanism. In the acyl-enzyme phase, the carbonyl group of the proproteins's omega-site undergoes a nucleophilic attack forming an enzyme-substrate thioester bond. Followed by a general acid catalysis that allows CSP releasing, regenerating the carbonyl, and forming the acyl-enzyme intermediate. In the GPI-anchor attachment phase, the amino group of the GPI-anchor's ethanolamine phosphate, the one on third mannose (EtNP3), mediates a nucleophilic attack on the carbonyl of the acyl-enzyme intermediate, replacing the CSP, allowing GPI-anchor attachment to the omega-residue, therefore forming the product and freeing the enzyme. This is GPI-anchor transamidase from Pongo abelii (Sumatran orangutan).